A 117-amino-acid chain; its full sequence is Immunoglobulin heavy variable 7-4-1 (117 aa).

The N-terminal stretch at 1-19 (MDWTWRILFLVAAATGAHS) is a signal peptide. The framework-1 stretch occupies residues 20–44 (QVQLVQSGSELKKPGASVKVSCKAS). Residues 20 to 117 (QVQLVQSGSE…EDTAVYYCAR (98 aa)) form the Ig-like domain. C41 and C115 are disulfide-bonded. The interval 45–52 (GYTFTSYA) is complementarity-determining-1. A framework-2 region spans residues 53–69 (MNWVRQAPGQGLEWMGW). The interval 70 to 77 (INTNTGNP) is complementarity-determining-2. A framework-3 region spans residues 78 to 115 (TYAQGFTGRFVFSLDTSVSTAYLQICSLKAEDTAVYYC). The interval 116 to 117 (AR) is complementarity-determining-3.

Immunoglobulins are composed of two identical heavy chains and two identical light chains; disulfide-linked.

The protein resides in the secreted. It localises to the cell membrane. Its function is as follows. V region of the variable domain of immunoglobulin heavy chains that participates in the antigen recognition. Immunoglobulins, also known as antibodies, are membrane-bound or secreted glycoproteins produced by B lymphocytes. In the recognition phase of humoral immunity, the membrane-bound immunoglobulins serve as receptors which, upon binding of a specific antigen, trigger the clonal expansion and differentiation of B lymphocytes into immunoglobulins-secreting plasma cells. Secreted immunoglobulins mediate the effector phase of humoral immunity, which results in the elimination of bound antigens. The antigen binding site is formed by the variable domain of one heavy chain, together with that of its associated light chain. Thus, each immunoglobulin has two antigen binding sites with remarkable affinity for a particular antigen. The variable domains are assembled by a process called V-(D)-J rearrangement and can then be subjected to somatic hypermutations which, after exposure to antigen and selection, allow affinity maturation for a particular antigen. The protein is Immunoglobulin heavy variable 7-4-1 of Homo sapiens (Human).